The chain runs to 123 residues: Urotensin-2 (123 aa).

A signal peptide spans 1 to 20; it reads MDRVPFCCLLFVGLLNPLLS. The propeptide occupies 21–104; that stretch reads FPVTDTGEMS…TVLSRLLART (84 aa). The segment at 63 to 91 is disordered; that stretch reads EAEGSLGQADPSAETPTPRGSLRKALTGQ. A disulfide bridge connects residues Cys117 and Cys122.

Belongs to the urotensin-2 family. Brain specific.

Its subcellular location is the secreted. In terms of biological role, highly potent vasoconstrictor. The polypeptide is Urotensin-2 (Uts2) (Rattus norvegicus (Rat)).